Reading from the N-terminus, the 131-residue chain is SPbeta prophage-derived uncharacterized protein YosD (131 aa).

Positions 102-131 (EHNNKKAKNNDTQNQRQIKTSWWQRLTKKD) are disordered. Polar residues predominate over residues 111 to 125 (NDTQNQRQIKTSWWQ).

This is SPbeta prophage-derived uncharacterized protein YosD (yosD) from Bacillus subtilis (strain 168).